Reading from the N-terminus, the 62-residue chain is DNA-directed RNA polymerase subunit Rpo10 (62 aa).

Zn(2+) contacts are provided by Cys6, Cys9, Cys43, and Cys44.

It belongs to the archaeal Rpo10/eukaryotic RPB10 RNA polymerase subunit family. As to quaternary structure, part of the RNA polymerase complex. Zn(2+) is required as a cofactor.

It localises to the cytoplasm. The catalysed reaction is RNA(n) + a ribonucleoside 5'-triphosphate = RNA(n+1) + diphosphate. DNA-dependent RNA polymerase (RNAP) catalyzes the transcription of DNA into RNA using the four ribonucleoside triphosphates as substrates. This is DNA-directed RNA polymerase subunit Rpo10 from Methanosphaerula palustris (strain ATCC BAA-1556 / DSM 19958 / E1-9c).